The sequence spans 236 residues: Leucyl/phenylalanyl-tRNA--protein transferase (236 aa).

Positions 1–13 are enriched in polar residues; that stretch reads MNSLSYLNQDQQS. The tract at residues 1–22 is disordered; sequence MNSLSYLNQDQQSFPPPEQALS.

Belongs to the L/F-transferase family.

The protein localises to the cytoplasm. It carries out the reaction N-terminal L-lysyl-[protein] + L-leucyl-tRNA(Leu) = N-terminal L-leucyl-L-lysyl-[protein] + tRNA(Leu) + H(+). It catalyses the reaction N-terminal L-arginyl-[protein] + L-leucyl-tRNA(Leu) = N-terminal L-leucyl-L-arginyl-[protein] + tRNA(Leu) + H(+). The catalysed reaction is L-phenylalanyl-tRNA(Phe) + an N-terminal L-alpha-aminoacyl-[protein] = an N-terminal L-phenylalanyl-L-alpha-aminoacyl-[protein] + tRNA(Phe). In terms of biological role, functions in the N-end rule pathway of protein degradation where it conjugates Leu, Phe and, less efficiently, Met from aminoacyl-tRNAs to the N-termini of proteins containing an N-terminal arginine or lysine. The chain is Leucyl/phenylalanyl-tRNA--protein transferase from Shewanella piezotolerans (strain WP3 / JCM 13877).